The primary structure comprises 166 residues: Transmembrane protein 278 (166 aa).

Residues 1–15 (MSDQERETEEDEGGD) show a composition bias toward acidic residues. The interval 1 to 28 (MSDQERETEEDEGGDPSDTAPMLPQRLP) is disordered. 3 helical membrane-spanning segments follow: residues 39 to 59 (GWASLAARGLGTLLFQGWALA), 65 to 85 (LLLPAAVFLLVLLPAAAVVYL), and 111 to 131 (AAVIVLGFLSLPPLLVLASAA).

It belongs to the TMEM88 family.

It localises to the membrane. The polypeptide is Transmembrane protein 278 (TMEM278) (Bos taurus (Bovine)).